Here is a 641-residue protein sequence, read N- to C-terminus: Fructose-1,6-bisphosphatase class 3 (641 aa).

The protein belongs to the FBPase class 3 family. Requires Mn(2+) as cofactor.

The catalysed reaction is beta-D-fructose 1,6-bisphosphate + H2O = beta-D-fructose 6-phosphate + phosphate. It functions in the pathway carbohydrate biosynthesis; gluconeogenesis. This chain is Fructose-1,6-bisphosphatase class 3, found in Ligilactobacillus salivarius (strain UCC118) (Lactobacillus salivarius).